A 265-amino-acid polypeptide reads, in one-letter code: Molybdenum-pterin-binding protein MopA (265 aa).

Mop domains lie at 126 to 192 (RTSN…MLAA) and 198 to 264 (RISA…ILAM).

The protein belongs to the ModE family.

The chain is Molybdenum-pterin-binding protein MopA (mopA) from Rhodobacter capsulatus (Rhodopseudomonas capsulata).